Here is a 338-residue protein sequence, read N- to C-terminus: Nicotinate-nucleotide--dimethylbenzimidazole phosphoribosyltransferase (338 aa).

Glutamate 305 (proton acceptor) is an active-site residue.

Belongs to the CobT family.

The enzyme catalyses 5,6-dimethylbenzimidazole + nicotinate beta-D-ribonucleotide = alpha-ribazole 5'-phosphate + nicotinate + H(+). It participates in nucleoside biosynthesis; alpha-ribazole biosynthesis; alpha-ribazole from 5,6-dimethylbenzimidazole: step 1/2. Functionally, catalyzes the synthesis of alpha-ribazole-5'-phosphate from nicotinate mononucleotide (NAMN) and 5,6-dimethylbenzimidazole (DMB). The protein is Nicotinate-nucleotide--dimethylbenzimidazole phosphoribosyltransferase of Rhizobium rhizogenes (strain K84 / ATCC BAA-868) (Agrobacterium radiobacter).